A 418-amino-acid polypeptide reads, in one-letter code: NADH-quinone oxidoreductase subunit H (418 aa).

A run of 9 helical transmembrane segments spans residues 15–35, 83–103, 123–143, 164–184, 197–217, 262–282, 287–307, 321–341, and 349–369; these read LVLGKALAIFVFLMLNVLVAI, FVYFAAPVISTIPAFTAFAFI, LPVAVLFILGLSAIGVYGIVL, VISYEVAMGLSFAAVFLYAGS, VWFVFLLLPSFVIYLISMVGE, LATALFFGGWHAPWPLNMWAG, WWPVLWFTAKMWTFLFIYFWL, GLGWKLLIPASLVWVLIAAVI, and YAHWTPILVISSIVFAAALVL. Positions 394–418 are disordered; that stretch reads AAHRAGFHPGIPDTAAAGESAGGRE.

It belongs to the complex I subunit 1 family. As to quaternary structure, NDH-1 is composed of 14 different subunits. Subunits NuoA, H, J, K, L, M, N constitute the membrane sector of the complex.

It localises to the cell membrane. It carries out the reaction a quinone + NADH + 5 H(+)(in) = a quinol + NAD(+) + 4 H(+)(out). Its function is as follows. NDH-1 shuttles electrons from NADH, via FMN and iron-sulfur (Fe-S) centers, to quinones in the respiratory chain. The immediate electron acceptor for the enzyme in this species is believed to be menaquinone. Couples the redox reaction to proton translocation (for every two electrons transferred, four hydrogen ions are translocated across the cytoplasmic membrane), and thus conserves the redox energy in a proton gradient. This subunit may bind ubiquinone. The sequence is that of NADH-quinone oxidoreductase subunit H from Mycobacterium avium (strain 104).